A 171-amino-acid polypeptide reads, in one-letter code: Lipoprotein signal peptidase (171 aa).

Transmembrane regions (helical) follow at residues 67-87 (YALLGLTLAATIFMILWLWRS) and 88-108 (TSKLIACALGLIIGGALGNAY). Residues D118 and D136 contribute to the active site. A helical membrane pass occupies residues 127–147 (FSWYVFNLADAAIVAGVALLL).

This sequence belongs to the peptidase A8 family.

The protein localises to the cell inner membrane. It carries out the reaction Release of signal peptides from bacterial membrane prolipoproteins. Hydrolyzes -Xaa-Yaa-Zaa-|-(S,diacylglyceryl)Cys-, in which Xaa is hydrophobic (preferably Leu), and Yaa (Ala or Ser) and Zaa (Gly or Ala) have small, neutral side chains.. It participates in protein modification; lipoprotein biosynthesis (signal peptide cleavage). Functionally, this protein specifically catalyzes the removal of signal peptides from prolipoproteins. The polypeptide is Lipoprotein signal peptidase (Methylocella silvestris (strain DSM 15510 / CIP 108128 / LMG 27833 / NCIMB 13906 / BL2)).